We begin with the raw amino-acid sequence, 177 residues long: Thymidine kinase (177 aa).

11 to 18 provides a ligand contact to ATP; sequence GPMLSGKS. Residue E83 is the Proton acceptor of the active site. Substrate is bound at residue F113. Zn(2+)-binding residues include C138 and C141. 157–161 contributes to the substrate binding site; that stretch reads IEIIG. Zn(2+) is bound by residues C170 and C173.

The protein belongs to the thymidine kinase family. Homotetramer. Two molecules of substrate bind to each enzyme tetramer.

It carries out the reaction thymidine + ATP = dTMP + ADP + H(+). Functionally, phosphorylates thymidine and thymidine analogs, such as azidothymidine (AZT). Part of the salvage pathway for pyrimidine deoxyribonucleotide synthesis. The protein is Thymidine kinase (OPG101) of Monkeypox virus (strain Zaire-96-I-16) (MPX).